Here is a 360-residue protein sequence, read N- to C-terminus: Histidinol-phosphate aminotransferase (360 aa).

Lysine 218 carries the post-translational modification N6-(pyridoxal phosphate)lysine.

It belongs to the class-II pyridoxal-phosphate-dependent aminotransferase family. Histidinol-phosphate aminotransferase subfamily. In terms of assembly, homodimer. Pyridoxal 5'-phosphate is required as a cofactor.

It carries out the reaction L-histidinol phosphate + 2-oxoglutarate = 3-(imidazol-4-yl)-2-oxopropyl phosphate + L-glutamate. The protein operates within amino-acid biosynthesis; L-histidine biosynthesis; L-histidine from 5-phospho-alpha-D-ribose 1-diphosphate: step 7/9. In Pelagibacter ubique (strain HTCC1062), this protein is Histidinol-phosphate aminotransferase.